The sequence spans 507 residues: Histidine ammonia-lyase (507 aa).

A cross-link (5-imidazolinone (Ala-Gly)) is located at residues 141–143; sequence ASG. Serine 142 is modified (2,3-didehydroalanine (Ser)).

It belongs to the PAL/histidase family. Post-translationally, contains an active site 4-methylidene-imidazol-5-one (MIO), which is formed autocatalytically by cyclization and dehydration of residues Ala-Ser-Gly.

It localises to the cytoplasm. It catalyses the reaction L-histidine = trans-urocanate + NH4(+). It functions in the pathway amino-acid degradation; L-histidine degradation into L-glutamate; N-formimidoyl-L-glutamate from L-histidine: step 1/3. The sequence is that of Histidine ammonia-lyase from Burkholderia pseudomallei (strain 1106a).